A 265-amino-acid polypeptide reads, in one-letter code: tRNA pseudouridine synthase A (265 aa).

The Nucleophile role is filled by Asp58. Tyr116 provides a ligand contact to substrate.

This sequence belongs to the tRNA pseudouridine synthase TruA family. Homodimer.

It carries out the reaction uridine(38/39/40) in tRNA = pseudouridine(38/39/40) in tRNA. In terms of biological role, formation of pseudouridine at positions 38, 39 and 40 in the anticodon stem and loop of transfer RNAs. The protein is tRNA pseudouridine synthase A of Neisseria meningitidis serogroup C (strain 053442).